The sequence spans 141 residues: Chorion protein S16 (141 aa).

Positions 1-22 (MSANNMRLLCLLLACYISAIVA) are cleaved as a signal peptide.

Belongs to the chorion protein S16 family.

Its subcellular location is the secreted. Chorion membrane (egg shell) protein; plays a role in protecting the egg from the environment. In Drosophila subobscura (Fruit fly), this protein is Chorion protein S16 (Cp16).